We begin with the raw amino-acid sequence, 513 residues long: Cobyric acid synthase (513 aa).

Residues Arg270–Val470 form the GATase cobBQ-type domain. Catalysis depends on Cys351, which acts as the Nucleophile. Residue His462 is part of the active site.

It belongs to the CobB/CobQ family. CobQ subfamily.

The protein operates within cofactor biosynthesis; adenosylcobalamin biosynthesis. Its function is as follows. Catalyzes amidations at positions B, D, E, and G on adenosylcobyrinic A,C-diamide. NH(2) groups are provided by glutamine, and one molecule of ATP is hydrogenolyzed for each amidation. The protein is Cobyric acid synthase of Leptothrix cholodnii (strain ATCC 51168 / LMG 8142 / SP-6) (Leptothrix discophora (strain SP-6)).